The following is a 155-amino-acid chain: SsrA-binding protein (155 aa).

The protein belongs to the SmpB family.

It is found in the cytoplasm. In terms of biological role, required for rescue of stalled ribosomes mediated by trans-translation. Binds to transfer-messenger RNA (tmRNA), required for stable association of tmRNA with ribosomes. tmRNA and SmpB together mimic tRNA shape, replacing the anticodon stem-loop with SmpB. tmRNA is encoded by the ssrA gene; the 2 termini fold to resemble tRNA(Ala) and it encodes a 'tag peptide', a short internal open reading frame. During trans-translation Ala-aminoacylated tmRNA acts like a tRNA, entering the A-site of stalled ribosomes, displacing the stalled mRNA. The ribosome then switches to translate the ORF on the tmRNA; the nascent peptide is terminated with the 'tag peptide' encoded by the tmRNA and targeted for degradation. The ribosome is freed to recommence translation, which seems to be the essential function of trans-translation. This is SsrA-binding protein from Bacillus cereus (strain ATCC 10987 / NRS 248).